Here is a 157-residue protein sequence, read N- to C-terminus: Fimbrial protein Q (157 aa).

A propeptide spanning residues Met-1–Gly-6 is cleaved from the precursor. Residue Phe-7 is modified to N-methylphenylalanine. An intrachain disulfide couples Cys-136 to Cys-155.

It belongs to the N-Me-Phe pilin family. The pili are polar flexible filaments of about 5.4 nanometers diameter and 2.5 micrometers average length; they consist of only a single polypeptide chain arranged in a helical configuration of five subunits per turn in the assembled pilus.

It is found in the fimbrium. In Moraxella bovis, this protein is Fimbrial protein Q (tfpQ).